The sequence spans 207 residues: MINYFELSLKNLGVSFTSESIDKLKFYIKRVLLFGSRFNLVSKNDLRFDAVLLHALDSVVGFPIIKDNNPHQVLDVGSGAGFPGIILAIFDNSRKYVLLERSNKKVTFLRMMSLELGLDNVKVLERDVADEKDKYEFITIRAFRDIREYASILRLILKNGGLIMAYKGRFDKIKFEISHIESLFSKIEIKESAISDAKERNFLLLYK.

S-adenosyl-L-methionine-binding positions include glycine 77, phenylalanine 82, 100–102 (ERS), and arginine 141.

Belongs to the methyltransferase superfamily. RNA methyltransferase RsmG family.

It localises to the cytoplasm. In terms of biological role, specifically methylates the N7 position of a guanine in 16S rRNA. In Borrelia hermsii (strain HS1 / DAH), this protein is Ribosomal RNA small subunit methyltransferase G.